The chain runs to 304 residues: Acetyl-coenzyme A carboxylase carboxyl transferase subunit beta (304 aa).

The CoA carboxyltransferase N-terminal domain maps to 23-292 (VWTKCDSCGQ…PNPDAPREGV (270 aa)). Zn(2+) contacts are provided by Cys27, Cys30, Cys46, and Cys49. A C4-type zinc finger spans residues 27–49 (CDSCGQVLYRAELERNLEVCPKC). The disordered stretch occupies residues 284-304 (NPDAPREGVVVPPAPGQESEA).

It belongs to the AccD/PCCB family. As to quaternary structure, acetyl-CoA carboxylase is a heterohexamer composed of biotin carboxyl carrier protein (AccB), biotin carboxylase (AccC) and two subunits each of ACCase subunit alpha (AccA) and ACCase subunit beta (AccD). The cofactor is Zn(2+).

The protein resides in the cytoplasm. It catalyses the reaction N(6)-carboxybiotinyl-L-lysyl-[protein] + acetyl-CoA = N(6)-biotinyl-L-lysyl-[protein] + malonyl-CoA. It participates in lipid metabolism; malonyl-CoA biosynthesis; malonyl-CoA from acetyl-CoA: step 1/1. In terms of biological role, component of the acetyl coenzyme A carboxylase (ACC) complex. Biotin carboxylase (BC) catalyzes the carboxylation of biotin on its carrier protein (BCCP) and then the CO(2) group is transferred by the transcarboxylase to acetyl-CoA to form malonyl-CoA. This chain is Acetyl-coenzyme A carboxylase carboxyl transferase subunit beta, found in Salmonella arizonae (strain ATCC BAA-731 / CDC346-86 / RSK2980).